Consider the following 102-residue polypeptide: Glutaredoxin-C14 (102 aa).

The Glutaredoxin domain maps to 1-101 (MDKVMRMSSE…PLIKPYQSFH (101 aa)). A disulfide bridge connects residues C21 and C24.

The protein belongs to the glutaredoxin family. CC-type subfamily.

It localises to the cytoplasm. Its function is as follows. Has a glutathione-disulfide oxidoreductase activity in the presence of NADPH and glutathione reductase. Reduces low molecular weight disulfides and proteins. The sequence is that of Glutaredoxin-C14 (GRXC14) from Arabidopsis thaliana (Mouse-ear cress).